The chain runs to 215 residues: Pyrrolidone-carboxylate peptidase (215 aa).

Residues E80, C143, and H167 contribute to the active site.

The protein belongs to the peptidase C15 family. As to quaternary structure, homotetramer.

The protein localises to the cytoplasm. It carries out the reaction Release of an N-terminal pyroglutamyl group from a polypeptide, the second amino acid generally not being Pro.. In terms of biological role, removes 5-oxoproline from various penultimate amino acid residues except L-proline. In Bacillus cereus (strain G9842), this protein is Pyrrolidone-carboxylate peptidase.